We begin with the raw amino-acid sequence, 112 residues long: Ribosome-binding factor A (112 aa).

The protein belongs to the RbfA family. Monomer. Binds 30S ribosomal subunits, but not 50S ribosomal subunits or 70S ribosomes.

The protein resides in the cytoplasm. Functionally, one of several proteins that assist in the late maturation steps of the functional core of the 30S ribosomal subunit. Associates with free 30S ribosomal subunits (but not with 30S subunits that are part of 70S ribosomes or polysomes). Required for efficient processing of 16S rRNA. May interact with the 5'-terminal helix region of 16S rRNA. The chain is Ribosome-binding factor A from Ruthia magnifica subsp. Calyptogena magnifica.